We begin with the raw amino-acid sequence, 403 residues long: Na(+)/H(+) antiporter NhaA (403 aa).

Transmembrane regions (helical) follow at residues 25 to 45, 70 to 90, 105 to 125, 136 to 156, 165 to 185, 188 to 208, 213 to 233, 234 to 254, 269 to 289, 302 to 322, 340 to 360, and 369 to 389; these read IAGLVLLVSMLVAFFWVNSPF, LILWINEGLMIVFFFLIGLEI, IALPAFAALGGMLVPAAIFLA, GWAVPAATDIVLALALLAMLG, VFLTALAIFDDFGTLVIIALA, EGLSLPSLLMAALGTLALIVL, VASLTAYVLVGVFVWVSVLES, GVHSTLAGVIIAWCIPMRVSG, VALLIVPLFAFFNAGIDLGGV, IILGLFVGKQVGVMLGVGLAV, GAALLSGVGFTMSLFVAGLAF, and VNLAVVVGSVLSATGGLVVLA.

This sequence belongs to the NhaA Na(+)/H(+) (TC 2.A.33) antiporter family.

The protein localises to the cell inner membrane. It carries out the reaction Na(+)(in) + 2 H(+)(out) = Na(+)(out) + 2 H(+)(in). Its function is as follows. Na(+)/H(+) antiporter that extrudes sodium in exchange for external protons. This chain is Na(+)/H(+) antiporter NhaA, found in Maricaulis maris (strain MCS10) (Caulobacter maris).